Consider the following 402-residue polypeptide: Nuclear hormone receptor family member nhr-96 (402 aa).

Positions 4-79 (FGLCAVCGQV…VGMDVKKIQQ (76 aa)) form a DNA-binding region, nuclear receptor. 2 NR C4-type zinc fingers span residues 7–27 (CAVC…CRSC) and 44–67 (CVKA…LKRC). In terms of domain architecture, NR LBD spans 154–402 (NYYNSLELLT…FSDPEMFELT (249 aa)).

The protein belongs to the nuclear hormone receptor family.

The protein localises to the nucleus. In terms of biological role, orphan nuclear receptor. In Caenorhabditis elegans, this protein is Nuclear hormone receptor family member nhr-96 (nhr-96).